Here is a 117-residue protein sequence, read N- to C-terminus: DNA-directed RNA polymerase subunit omega (117 aa).

This sequence belongs to the RNA polymerase subunit omega family. The RNAP catalytic core consists of 2 alpha, 1 beta, 1 beta' and 1 omega subunit. When a sigma factor is associated with the core the holoenzyme is formed, which can initiate transcription.

The enzyme catalyses RNA(n) + a ribonucleoside 5'-triphosphate = RNA(n+1) + diphosphate. Promotes RNA polymerase assembly. Latches the N- and C-terminal regions of the beta' subunit thereby facilitating its interaction with the beta and alpha subunits. The chain is DNA-directed RNA polymerase subunit omega from Cereibacter sphaeroides (strain ATCC 17025 / ATH 2.4.3) (Rhodobacter sphaeroides).